Reading from the N-terminus, the 367-residue chain is MAIQKRVLVAMSGGVDSSVTAALLQQQGYDIVGVTMQIWDPEVTVVGDDYVGCCSLTAVDDARRVANVLGIPYYVLNFRELFTEKVIQYFVDEYFQGRTPNPCIACNRFIKFEALLQRARQMGFDYIATGHYARLGYSEEFQRYTVKKALDDKKDQSYVLYGFTQDQIAHTLMPLADYTKDQVRGIAKEMGLPTYSKPESQEICFVHDNNYRNFLDERSQGGIKPGPFKDLAGNVLGEHKGIPFYTIGQRRGLGLATGERTYVIDIDPDNNVVTVGSEEAIWGTELIASENNFILFENLTGPQELEAQVRYNSKPSPAIIEPYGEGLVKVTFKYPQRAITPGQAVVYYQGDYLVGGGTIEKTIKQKN.

ATP-binding positions include 10–17 (AMSGGVDS) and M36. The active-site Nucleophile is the C106. C106 and C204 are oxidised to a cystine. Residue G130 participates in ATP binding. The interval 154–156 (KDQ) is interaction with tRNA. C204 serves as the catalytic Cysteine persulfide intermediate. Residues 310-311 (RY) are interaction with tRNA.

This sequence belongs to the MnmA/TRMU family.

Its subcellular location is the cytoplasm. The enzyme catalyses S-sulfanyl-L-cysteinyl-[protein] + uridine(34) in tRNA + AH2 + ATP = 2-thiouridine(34) in tRNA + L-cysteinyl-[protein] + A + AMP + diphosphate + H(+). Functionally, catalyzes the 2-thiolation of uridine at the wobble position (U34) of tRNA, leading to the formation of s(2)U34. The sequence is that of tRNA-specific 2-thiouridylase MnmA from Desulforamulus reducens (strain ATCC BAA-1160 / DSM 100696 / MI-1) (Desulfotomaculum reducens).